A 143-amino-acid polypeptide reads, in one-letter code: Ribosome-binding factor A (143 aa).

The interval 123-143 (DNSLQENYKDSDKETKVEKLR) is disordered.

It belongs to the RbfA family. Monomer. Binds 30S ribosomal subunits, but not 50S ribosomal subunits or 70S ribosomes.

Its subcellular location is the cytoplasm. In terms of biological role, one of several proteins that assist in the late maturation steps of the functional core of the 30S ribosomal subunit. Associates with free 30S ribosomal subunits (but not with 30S subunits that are part of 70S ribosomes or polysomes). Required for efficient processing of 16S rRNA. May interact with the 5'-terminal helix region of 16S rRNA. In Francisella philomiragia subsp. philomiragia (strain ATCC 25017 / CCUG 19701 / FSC 153 / O#319-036), this protein is Ribosome-binding factor A.